Here is a 33-residue protein sequence, read N- to C-terminus: Cytochrome b6-f complex subunit 8 (33 aa).

Residues 2–22 form a helical membrane-spanning segment; it reads LFTLGWASLAAMFSFSIAMVV.

This sequence belongs to the PetN family. The 4 large subunits of the cytochrome b6-f complex are cytochrome b6, subunit IV (17 kDa polypeptide, PetD), cytochrome f and the Rieske protein, while the 4 small subunits are PetG, PetL, PetM and PetN. The complex functions as a dimer.

It localises to the cellular thylakoid membrane. In terms of biological role, component of the cytochrome b6-f complex, which mediates electron transfer between photosystem II (PSII) and photosystem I (PSI), cyclic electron flow around PSI, and state transitions. The protein is Cytochrome b6-f complex subunit 8 of Synechococcus sp. (strain CC9605).